Consider the following 100-residue polypeptide: Large ribosomal subunit protein bL21 (100 aa).

It belongs to the bacterial ribosomal protein bL21 family. In terms of assembly, part of the 50S ribosomal subunit. Contacts protein L20.

In terms of biological role, this protein binds to 23S rRNA in the presence of protein L20. This Mycoplasma mycoides subsp. mycoides SC (strain CCUG 32753 / NCTC 10114 / PG1) protein is Large ribosomal subunit protein bL21.